Reading from the N-terminus, the 339-residue chain is Cobalt-precorrin-5B C(1)-methyltransferase (339 aa).

It belongs to the CbiD family.

It carries out the reaction Co-precorrin-5B + S-adenosyl-L-methionine = Co-precorrin-6A + S-adenosyl-L-homocysteine. Its pathway is cofactor biosynthesis; adenosylcobalamin biosynthesis; cob(II)yrinate a,c-diamide from sirohydrochlorin (anaerobic route): step 6/10. Functionally, catalyzes the methylation of C-1 in cobalt-precorrin-5B to form cobalt-precorrin-6A. This chain is Cobalt-precorrin-5B C(1)-methyltransferase, found in Methanosarcina acetivorans (strain ATCC 35395 / DSM 2834 / JCM 12185 / C2A).